Reading from the N-terminus, the 296-residue chain is Ribosomal RNA small subunit methyltransferase A (296 aa).

S-adenosyl-L-methionine is bound by residues Asn40, Val42, Gly67, Glu88, Asp118, and Asn137.

This sequence belongs to the class I-like SAM-binding methyltransferase superfamily. rRNA adenine N(6)-methyltransferase family. RsmA subfamily.

Its subcellular location is the cytoplasm. It catalyses the reaction adenosine(1518)/adenosine(1519) in 16S rRNA + 4 S-adenosyl-L-methionine = N(6)-dimethyladenosine(1518)/N(6)-dimethyladenosine(1519) in 16S rRNA + 4 S-adenosyl-L-homocysteine + 4 H(+). Its function is as follows. Specifically dimethylates two adjacent adenosines (A1518 and A1519) in the loop of a conserved hairpin near the 3'-end of 16S rRNA in the 30S particle. May play a critical role in biogenesis of 30S subunits. The protein is Ribosomal RNA small subunit methyltransferase A of Rhodococcus opacus (strain B4).